We begin with the raw amino-acid sequence, 506 residues long: ATP synthase subunit alpha (506 aa).

Position 170–177 (170–177 (GDRQTGKT)) interacts with ATP.

It belongs to the ATPase alpha/beta chains family. F-type ATPases have 2 components, CF(1) - the catalytic core - and CF(0) - the membrane proton channel. CF(1) has five subunits: alpha(3), beta(3), gamma(1), delta(1), epsilon(1). CF(0) has four main subunits: a(1), b(1), b'(1) and c(9-12).

It localises to the cellular thylakoid membrane. It catalyses the reaction ATP + H2O + 4 H(+)(in) = ADP + phosphate + 5 H(+)(out). Produces ATP from ADP in the presence of a proton gradient across the membrane. The alpha chain is a regulatory subunit. The protein is ATP synthase subunit alpha of Synechococcus sp. (strain CC9605).